The primary structure comprises 264 residues: Putative hydro-lyase Cgl2544/cg2803 (264 aa).

The protein belongs to the D-glutamate cyclase family.

This is Putative hydro-lyase Cgl2544/cg2803 from Corynebacterium glutamicum (strain ATCC 13032 / DSM 20300 / JCM 1318 / BCRC 11384 / CCUG 27702 / LMG 3730 / NBRC 12168 / NCIMB 10025 / NRRL B-2784 / 534).